Consider the following 273-residue polypeptide: 4-diphosphocytidyl-2-C-methyl-D-erythritol kinase (273 aa).

K12 is a catalytic residue. Residue 90–100 coordinates ATP; the sequence is PVASGIGGGSA. D122 is an active-site residue.

Belongs to the GHMP kinase family. IspE subfamily.

The enzyme catalyses 4-CDP-2-C-methyl-D-erythritol + ATP = 4-CDP-2-C-methyl-D-erythritol 2-phosphate + ADP + H(+). It participates in isoprenoid biosynthesis; isopentenyl diphosphate biosynthesis via DXP pathway; isopentenyl diphosphate from 1-deoxy-D-xylulose 5-phosphate: step 3/6. Catalyzes the phosphorylation of the position 2 hydroxy group of 4-diphosphocytidyl-2C-methyl-D-erythritol. In Paracoccus denitrificans (strain Pd 1222), this protein is 4-diphosphocytidyl-2-C-methyl-D-erythritol kinase.